A 756-amino-acid polypeptide reads, in one-letter code: Cholesterol uptake protein 1 (756 aa).

Residues 1–18 form the signal peptide; it reads MRTSQAIFILIFLDSVRN. Residues 19-268 lie on the Extracellular side of the membrane; it reads QSPQVIPAKW…TIESSMKIFD (250 aa). N-linked (GlcNAc...) asparagine glycans are attached at residues Asn39 and Asn63. A Cholesterol-binding sequence motif motif is present at residues 124–129; it reads VHYNFR. Residues Asn140, Asn174, and Asn257 are each glycosylated (N-linked (GlcNAc...) asparagine). The helical transmembrane segment at 269 to 289 threads the bilayer; the sequence is YTIPIVFWACILLLVTIVVFV. Over 290 to 373 the chain is Cytoplasmic; it reads YHYFDGIWER…YEERELKYDV (84 aa). The helical transmembrane segment at 374 to 394 threads the bilayer; that stretch reads YKIALAIIGIFYNITVLQLII. The Extracellular segment spans residues 395 to 421; that stretch reads SKAGSLRQSGDLDECTFNFQCARPLWY. The helical transmembrane segment at 422–442 threads the bilayer; sequence FVAFNNVVSNGGYVYFGTLII. The Cytoplasmic portion of the chain corresponds to 443–473; the sequence is VMNYCRERSFRRLFAVQPTLAERYGLPQHSG. A helical membrane pass occupies residues 474 to 494; sequence LMTAIGLAVIMEGISSATYHV. Topologically, residues 495–498 are extracellular; it reads CPNN. The chain crosses the membrane as a helical span at residues 499–517; it reads INYQFDTALMYVIGMLGKL. Residues 518-530 are Cytoplasmic-facing; it reads KIWSLRHPDMVVS. A helical membrane pass occupies residues 531–551; it reads AYHAFGFLGVFLMAAIAGVYV. Residues 552–554 lie on the Extracellular side of the membrane; the sequence is HNM. The chain crosses the membrane as a helical span at residues 555–575; that stretch reads IFWALFSIIYIASMLLVSLEF. A Cholesterol-binding sequence motif motif is present at residues 570 to 578; that stretch reads LVSLEFYFK. Over 576-612 the chain is Cytoplasmic; it reads YFKGIWTLNLRELRNSIRLSWVSSRHLSCVVPAYKAR. Residues 613–633 form a helical membrane-spanning segment; sequence FFVILLLNIANTAVVVYGLEA. The Extracellular portion of the chain corresponds to 634–637; that stretch reads HPKD. A helical membrane pass occupies residues 638-658; that stretch reads FLSFLLIPFIGNLFIYIIYYI. The Cytoplasmic portion of the chain corresponds to 659–671; sequence LMKMIYREKIPKR. The chain crosses the membrane as a helical span at residues 672-692; that stretch reads AIALLFAAVISWTCAGILFNQ. The Extracellular segment spans residues 693–728; the sequence is RVSDWSKMPAISRELNKPCIFLNFYDNHDLWHLSSA. A helical transmembrane segment spans residues 729-749; sequence FAIFFSFTAINVIDDDLMFVM. At 750–756 the chain is on the cytoplasmic side; the sequence is RNTIRVF.

This sequence belongs to the SID1 family. Highly expressed along the intestine with expression also detected in the pharynx, especially at the terminal bulb, and in the excretory gland cells.

The protein resides in the cell membrane. It carries out the reaction cholesterol(in) = cholesterol(out). In terms of biological role, cholesterol-binding protein which is involved in dietary cholesterol uptake from the environment. Does not play a role in double-stranded RNA transport in contrast to other SID1 family members. In Caenorhabditis elegans, this protein is Cholesterol uptake protein 1.